The sequence spans 500 residues: Lysine--tRNA ligase (500 aa).

Mg(2+) is bound by residues Glu410 and Glu417.

Belongs to the class-II aminoacyl-tRNA synthetase family. As to quaternary structure, homodimer. The cofactor is Mg(2+).

It is found in the cytoplasm. It catalyses the reaction tRNA(Lys) + L-lysine + ATP = L-lysyl-tRNA(Lys) + AMP + diphosphate. The polypeptide is Lysine--tRNA ligase (Shewanella loihica (strain ATCC BAA-1088 / PV-4)).